The sequence spans 388 residues: Omega-hydroxy-beta-dihydromenaquinone-9 sulfotransferase Stf3 (388 aa).

Belongs to the Stf3 family.

The enzyme catalyses omega-hydroxy-beta-dihydromenaquinone-9 + 3'-phosphoadenylyl sulfate = omega-sulfo-beta-dihydromenaquinone-9 + adenosine 3',5'-bisphosphate + H(+). Functionally, involved in the biosynthesis of sulfomenaquinone (SMK, initially named S881 on the basis of its mass), which is localized in the outer envelope of M.bovis and negatively regulates its virulence. Catalyzes the transfer of a sulfonate group from 3'-phosphoadenosine-5'-phosphosulfate (PAPS) to omega-hydroxy-beta-dihydromenaquinone-9, generating omega-sulfo-beta-dihydromenaquinone-9 (sulfomenaquinone). The protein is Omega-hydroxy-beta-dihydromenaquinone-9 sulfotransferase Stf3 of Mycobacterium bovis (strain ATCC BAA-935 / AF2122/97).